Reading from the N-terminus, the 472-residue chain is Membrane-bound acylglycerophosphatidylinositol O-acyltransferase MBOAT7 (472 aa).

The Cytoplasmic portion of the chain corresponds to 1–5 (MSPEE). A helical transmembrane segment spans residues 6–22 (WTYLVVLLISIPIGFLF). Over 23-33 (KKAGPGLKRWG) the chain is Lumenal. Residues 34 to 57 (AAAVGLGLTLFTCGPHTLHSLVTI) form a helical membrane-spanning segment. The Cytoplasmic portion of the chain corresponds to 58–73 (LGTWALIQAQPCSCHA). A helical membrane pass occupies residues 74-93 (LALAWTFSYLLFFRALSLLG). The Lumenal portion of the chain corresponds to 94 to 194 (LPTPTPFTNA…VPSLRPLLRR (101 aa)). A helical membrane pass occupies residues 195–212 (AWPAPLFGLLFLLSSHLF). Residues 213 to 231 (PLEAVREDAFYARPLPARL) are Cytoplasmic-facing. A helical transmembrane segment spans residues 232–261 (FYMIPVFFAFRMRFYVAWIAAECGCIAAGF). The Lumenal segment spans residues 262-426 (GAYPVAAKAR…LSLADTLRYW (165 aa)). A glycan (N-linked (GlcNAc...) asparagine) is linked at asparagine 321. The helical transmembrane segment at 427-447 (ASIYFCIHFLALAALGLGLAL) threads the bilayer. The Cytoplasmic portion of the chain corresponds to 448–472 (GGGSPSRRKAASQPTSLAPEKLREE). Residues 453–472 (SRRKAASQPTSLAPEKLREE) are disordered.

The protein belongs to the membrane-bound acyltransferase family. In terms of assembly, interacts with SPTSSA; the interaction facilitates MBOAT7 location to mitochondria-associated membranes (MAMs). As to expression, overexpressed in metastatic breast and bladder carcinomas relative to normal breast epithelium and urothelium.

It localises to the endoplasmic reticulum membrane. The catalysed reaction is a 1-acyl-sn-glycero-3-phospho-(1D-myo-inositol) + (5Z,8Z,11Z,14Z)-eicosatetraenoyl-CoA = a 1-acyl-2-(5Z,8Z,11Z,14Z-eicosatetraenoyl)-sn-glycero-3-phospho-(1D-myo-inositol) + CoA. It carries out the reaction (5Z,8Z,11Z,14Z)-eicosatetraenoyl-CoA + 1-hexadecanoyl-sn-glycero-3-phosphocholine = 1-hexadecanoyl-2-(5Z,8Z,11Z,14Z-eicosatetraenoyl)-sn-glycero-3-phosphocholine + CoA. It catalyses the reaction a 1-acyl-sn-glycero-3-phospho-(1D-myo-inositol) + an acyl-CoA = a 1,2-diacyl-sn-glycero-3-phospho-(1D-myo-inositol) + CoA. The enzyme catalyses 1-octadecanoyl-sn-glycero-3-phospho-(1D-myo-inositol) + (5Z,8Z,11Z,14Z)-eicosatetraenoyl-CoA = 1-octadecanoyl-2-(5Z,8Z,11Z,14Z-eicosatetraenoyl)-sn-glycero-3-phospho-(1D-myo-inositol) + CoA. Its pathway is lipid metabolism; phospholipid metabolism. Activity is inhibited by thimerosal. Acyltransferase which catalyzes the transfer of an acyl group from an acyl-CoA to a lysophosphatidylinositol (1-acylglycerophosphatidylinositol or LPI) leading to the production of a phosphatidylinositol (1,2-diacyl-sn-glycero-3-phosphoinositol or PI) and participates in the reacylation step of the phospholipid remodeling pathway also known as the Lands cycle. Prefers arachidonoyl-CoA as the acyl donor, thus contributing to the regulation of free levels arachidonic acid in cell. In liver, participates in the regulation of triglyceride metabolism through the phosphatidylinositol acyl-chain remodeling regulation. This chain is Membrane-bound acylglycerophosphatidylinositol O-acyltransferase MBOAT7, found in Homo sapiens (Human).